A 589-amino-acid chain; its full sequence is L-fucose isomerase (589 aa).

Residues E340 and D364 each act as proton acceptor in the active site. Positions 340, 364, and 527 each coordinate Mn(2+).

This sequence belongs to the L-fucose isomerase family. Mn(2+) is required as a cofactor.

The protein localises to the cytoplasm. The catalysed reaction is L-fucose = L-fuculose. Its pathway is carbohydrate degradation; L-fucose degradation; L-lactaldehyde and glycerone phosphate from L-fucose: step 1/3. In terms of biological role, converts the aldose L-fucose into the corresponding ketose L-fuculose. This chain is L-fucose isomerase, found in Haemophilus influenzae (strain PittEE).